The following is a 220-amino-acid chain: 7-cyano-7-deazaguanine synthase (220 aa).

10–20 (FSGGQDSTTCL) provides a ligand contact to ATP. 4 residues coordinate Zn(2+): cysteine 186, cysteine 195, cysteine 198, and cysteine 201.

This sequence belongs to the QueC family. In terms of assembly, homodimer. Zn(2+) is required as a cofactor.

It carries out the reaction 7-carboxy-7-deazaguanine + NH4(+) + ATP = 7-cyano-7-deazaguanine + ADP + phosphate + H2O + H(+). It participates in purine metabolism; 7-cyano-7-deazaguanine biosynthesis. Functionally, catalyzes the ATP-dependent conversion of 7-carboxy-7-deazaguanine (CDG) to 7-cyano-7-deazaguanine (preQ(0)). The protein is 7-cyano-7-deazaguanine synthase of Bacillus thuringiensis (strain Al Hakam).